A 303-amino-acid chain; its full sequence is MAGRAILIAGPTASGKSALALGLAQARGGVVINADSMQVYGDLRVLTARPSPEEEEAAPHRLYGHVDGAVNYSVGHYLADAGRVLRDAWAAERLPIVVGGTGLYFKALLEGLSAIPPVPEAVRAAVRAQAEGRETASLHADLARLDPEGAARIAPGDRLRVLRALEIRAATGRPLSAFQGSRQPGPLAGVACEKLFLAPDRAGLRARIDARFLSMMEAGALDEVRRLRARHLDPMLPVMRAHGVPGLIAHLNGALTREEAVARGQADTRRYAKRQVTWFRHQVGEDWRWLTPEEAAREFLPGH.

10–17 (GPTASGKS) contributes to the ATP binding site. Position 12 to 17 (12 to 17 (TASGKS)) interacts with substrate. Residues 35–38 (DSMQ) form an interaction with substrate tRNA region.

This sequence belongs to the IPP transferase family. Monomer. It depends on Mg(2+) as a cofactor.

The catalysed reaction is adenosine(37) in tRNA + dimethylallyl diphosphate = N(6)-dimethylallyladenosine(37) in tRNA + diphosphate. In terms of biological role, catalyzes the transfer of a dimethylallyl group onto the adenine at position 37 in tRNAs that read codons beginning with uridine, leading to the formation of N6-(dimethylallyl)adenosine (i(6)A). In Methylobacterium nodulans (strain LMG 21967 / CNCM I-2342 / ORS 2060), this protein is tRNA dimethylallyltransferase.